The chain runs to 568 residues: Urease subunit alpha (568 aa).

A Urease domain is found at 130-568 (GGIDTHIHFI…LPMAQRYFLF (439 aa)). Histidine 135, histidine 137, and lysine 218 together coordinate Ni(2+). Lysine 218 bears the N6-carboxylysine mark. Residue histidine 220 coordinates substrate. Histidine 247 and histidine 273 together coordinate Ni(2+). The Proton donor role is filled by histidine 321. Residue aspartate 361 coordinates Ni(2+).

This sequence belongs to the metallo-dependent hydrolases superfamily. Urease alpha subunit family. In terms of assembly, heterotrimer of UreA (gamma), UreB (beta) and UreC (alpha) subunits. Three heterotrimers associate to form the active enzyme. Ni cation is required as a cofactor. In terms of processing, carboxylation allows a single lysine to coordinate two nickel ions.

The protein resides in the cytoplasm. The catalysed reaction is urea + 2 H2O + H(+) = hydrogencarbonate + 2 NH4(+). It participates in nitrogen metabolism; urea degradation; CO(2) and NH(3) from urea (urease route): step 1/1. The protein is Urease subunit alpha of Burkholderia cenocepacia (strain ATCC BAA-245 / DSM 16553 / LMG 16656 / NCTC 13227 / J2315 / CF5610) (Burkholderia cepacia (strain J2315)).